The following is a 379-amino-acid chain: MDKTIWIKADKGHWEAHKDRITTGLESGANCVLVNSDEVEKVRELGDIQVAAFTYDDKSGADIVVVGKGGEGDGTKPLSPDPVGSLDMITAIRLKEKGLTVGAYVVIQNKKYEEFAAEIGKECDFLIIVGTDWKVIPLENLIAALQDSDVKIIAGVRDQDEAKLALETMEHGSEGVLLDSDDPNTIKATVAVAERSGIEDLKLVPGKVTKVEAVGMGDRVCVDTCNMMTKGEGMLVGSQASGMFLVHSESEESPYVASRPFRVNAGAVHAYVKVGDRTRYLSELSSGDEVTIVNAGGKQRTGIVGRVKIERRPLMLVEAEVNGEIIKNILQNAETIKLVDINGEPISVADLKPGNEVMVYYEGGARHFGMKVEETIIEK.

It belongs to the archaeal-type DHQ synthase family.

It catalyses the reaction 2-amino-2,3,7-trideoxy-D-lyxo-hept-6-ulosonate + NAD(+) + H2O = 3-dehydroquinate + NH4(+) + NADH + H(+). In terms of biological role, catalyzes the oxidative deamination and cyclization of 2-amino-3,7-dideoxy-D-threo-hept-6-ulosonic acid (ADH) to yield 3-dehydroquinate (DHQ), which is fed into the canonical shikimic pathway of aromatic amino acid biosynthesis. In Methanococcoides burtonii (strain DSM 6242 / NBRC 107633 / OCM 468 / ACE-M), this protein is 3-dehydroquinate synthase.